The following is an 834-amino-acid chain: Taste receptor type 1 member 2 (834 aa).

An N-terminal signal peptide occupies residues 1 to 19; sequence MEPRVRTVCFLFFLLRVLA. At 20 to 561 the chain is on the extracellular side; the sequence is EPAKNSDFYL…SFLEWHEAAT (542 aa). Residues N84, N292, N312, N363, N423, N482, and N522 are each glycosylated (N-linked (GlcNAc...) asparagine). Residues 562–582 traverse the membrane as a helical segment; that stretch reads IAVALLAALGFLSTLAILVIF. Residues 583–597 are Cytoplasmic-facing; the sequence is WRHFETPMVRSAGGP. The helical transmembrane segment at 598 to 618 threads the bilayer; the sequence is MCFLMLTLLLVAYMVVPVYVG. The Extracellular portion of the chain corresponds to 619–630; that stretch reads LPKVSTCLCRQA. Residues 631–651 form a helical membrane-spanning segment; that stretch reads LFPVCFTICISCIAVRSFQIV. The Cytoplasmic segment spans residues 652–676; the sequence is CVFKMASRFPRAYSYWVRYQGSYVS. Residues 677 to 697 form a helical membrane-spanning segment; it reads VAFITALKMVTVVISLLATGL. Residues 698 to 722 lie on the Extracellular side of the membrane; that stretch reads NPTTRTDTDDPKIMIISCNPNYRNS. Residues 723–743 traverse the membrane as a helical segment; that stretch reads LLFNTSLDLLLSVAGFSFAYM. Residues 744-755 lie on the Cytoplasmic side of the membrane; that stretch reads GKELPTNYNEAK. Residues 756–776 form a helical membrane-spanning segment; the sequence is FITFSMTFYFTSSVSLCTFMS. At 777-779 the chain is on the extracellular side; it reads VYD. Residues 780 to 800 form a helical membrane-spanning segment; sequence GVLVTIVDLLVTVFNLLAISL. Over 801–834 the chain is Cytoplasmic; that stretch reads GYFGPKCYMILFYPERNTPAYFNSMIQGYTMRRD.

Belongs to the G-protein coupled receptor 3 family. TAS1R subfamily. As to quaternary structure, forms heterodimers with TAS1R3.

The protein localises to the cell membrane. In terms of biological role, putative taste receptor. TAS1R2/TAS1R3 recognizes diverse natural and synthetic sweeteners. The polypeptide is Taste receptor type 1 member 2 (TAS1R2) (Saimiri sciureus (Common squirrel monkey)).